Reading from the N-terminus, the 308-residue chain is Glycine--tRNA ligase alpha subunit (308 aa).

The protein belongs to the class-II aminoacyl-tRNA synthetase family. In terms of assembly, tetramer of two alpha and two beta subunits.

It is found in the cytoplasm. It carries out the reaction tRNA(Gly) + glycine + ATP = glycyl-tRNA(Gly) + AMP + diphosphate. The chain is Glycine--tRNA ligase alpha subunit from Polaromonas naphthalenivorans (strain CJ2).